Here is a 649-residue protein sequence, read N- to C-terminus: Threonine--tRNA ligase (649 aa).

One can recognise a TGS domain in the interval 1–63; that stretch reads MSSIKITFPD…KEDGSIEIIT (63 aa). Residues 245-543 are catalytic; that stretch reads DHRVIGNELD…LTEMYKGAFP (299 aa). The Zn(2+) site is built by cysteine 339, histidine 390, and histidine 520.

This sequence belongs to the class-II aminoacyl-tRNA synthetase family. In terms of assembly, homodimer. Zn(2+) is required as a cofactor.

Its subcellular location is the cytoplasm. It carries out the reaction tRNA(Thr) + L-threonine + ATP = L-threonyl-tRNA(Thr) + AMP + diphosphate + H(+). Functionally, catalyzes the attachment of threonine to tRNA(Thr) in a two-step reaction: L-threonine is first activated by ATP to form Thr-AMP and then transferred to the acceptor end of tRNA(Thr). Also edits incorrectly charged L-seryl-tRNA(Thr). The sequence is that of Threonine--tRNA ligase from Ligilactobacillus salivarius (strain UCC118) (Lactobacillus salivarius).